The sequence spans 755 residues: Oligopeptide transporter 1 (755 aa).

13 helical membrane passes run T58 to F78, Q82 to A102, I134 to V154, A165 to F185, F226 to P246, F298 to I318, Y370 to I390, W434 to F454, W462 to I482, F546 to W566, G614 to W634, A664 to F684, and I697 to F717.

It belongs to the oligopeptide OPT transporter (TC 2.A.67.1) family. As to expression, highly expressed in flowers, and moderately expressed in leaves and stems.

It localises to the membrane. In terms of biological role, involved in the translocation of tetra- and pentapeptides across the cellular membrane in an energy-dependent manner. The polypeptide is Oligopeptide transporter 1 (OPT1) (Arabidopsis thaliana (Mouse-ear cress)).